Consider the following 156-residue polypeptide: Small ribosomal subunit protein uS7 (156 aa).

This sequence belongs to the universal ribosomal protein uS7 family. Part of the 30S ribosomal subunit. Contacts proteins S9 and S11.

One of the primary rRNA binding proteins, it binds directly to 16S rRNA where it nucleates assembly of the head domain of the 30S subunit. Is located at the subunit interface close to the decoding center, probably blocks exit of the E-site tRNA. This is Small ribosomal subunit protein uS7 from Pseudomonas fluorescens (strain SBW25).